Here is a 97-residue protein sequence, read N- to C-terminus: MTKNMTKKKMGLMSPNIAAFVLPMLLVLFTISSQVEVVESTGRKLSWAFNGAPIVFTPPSSSCGGSPAAVMASEWMPRRPCRRTRPPGTNIPVSQSP.

Positions 1–33 (MTKNMTKKKMGLMSPNIAAFVLPMLLVLFTISS) are cleaved as a signal peptide. Residues 54-67 (IVFTPPSSSCGGSP) carry the SCOOP motif motif. A SxS motif essential for MIK2 binding motif is present at residues 60 to 62 (SSS). The tract at residues 75-97 (WMPRRPCRRTRPPGTNIPVSQSP) is disordered.

The protein belongs to the serine rich endogenous peptide (SCOOP) phytocytokine family. As to quaternary structure, interacts with MIK2 (via extracellular leucine-rich repeat domain); this interaction triggers the formation of complex between MIK2 and the BAK1/SERK3 and SERK4 coreceptors, and subsequent BAK1 activation by phosphorylation. As to expression, mostly expressed in leaves and stems, and, to a lower extent, in roots, siliques, seeds and flowers.

Its subcellular location is the cell membrane. The protein resides in the secreted. It is found in the extracellular space. It localises to the apoplast. Functionally, brassicaceae-specific phytocytokine (plant endogenous peptide released into the apoplast) perceived by MIK2 in a BAK1/SERK3 and SERK4 coreceptors-dependent manner, that modulates various physiological and antimicrobial processes including growth prevention and reactive oxygen species (ROS) response regulation. Prevents general growth and development. In Arabidopsis thaliana (Mouse-ear cress), this protein is Secreted transmembrane peptide 4.